Here is a 410-residue protein sequence, read N- to C-terminus: MKEKTIIIVGGGQAAAMAAASLRQQGFTGELHLFSDERHLPYERPPLSKSMLLEDSPQLQQVLPANWWQENNVHLHSGVTIKTLGRDTRELVLTNGESWHWDQLFIATGAAARPLPLLDALGERCFTLHHAGDAARLREVLQPERSVVIVGAGTIGLELAASATQRSAAQRSAAQRRCKVTVIELAATVMGRNAPPPVQRYLLQRHQQAGVRILLNNAIEHVVDGEKVELTLQSGETLQADVVIYGIGISANEQLAREANLDTANGIVIDEACRTCDPAIFAGGDVAITRLDNGALHRCESWENANNQAQIAAAAMLGLPLPLLPPPWFWSDQYSDNLQFIGDMRGDDWLCRGNPETQKAIWFNLQNGVLIGAVTLNQGREIRPIRKWIQSGKTFDAKLLIDENIALKSL.

5–36 (TIIIVGGGQAAAMAAASLRQQGFTGELHLFSD) is a binding site for FAD. Position 146 to 184 (146 to 184 (SVVIVGAGTIGLELAASATQRSAAQRSAAQRRCKVTVIE)) interacts with NAD(+).

This sequence belongs to the bacterial ring-hydroxylating dioxygenase ferredoxin reductase family. As to quaternary structure, this dioxygenase system consists of four proteins: the two subunits of the hydroxylase component (HcaE and HcaF), a ferredoxin (HcaC) and a ferredoxin reductase (HcaD). FAD serves as cofactor.

It carries out the reaction 2 reduced [2Fe-2S]-[ferredoxin] + NAD(+) + H(+) = 2 oxidized [2Fe-2S]-[ferredoxin] + NADH. It functions in the pathway aromatic compound metabolism; 3-phenylpropanoate degradation. In terms of biological role, part of the multicomponent 3-phenylpropionate dioxygenase, that converts 3-phenylpropionic acid (PP) and cinnamic acid (CI) into 3-phenylpropionate-dihydrodiol (PP-dihydrodiol) and cinnamic acid-dihydrodiol (CI-dihydrodiol), respectively. This is 3-phenylpropionate/cinnamic acid dioxygenase ferredoxin--NAD(+) reductase component from Shigella flexneri serotype 5b (strain 8401).